We begin with the raw amino-acid sequence, 414 residues long: Serine hydroxymethyltransferase (414 aa).

Residues Leu-116 and 120 to 122 contribute to the (6S)-5,6,7,8-tetrahydrofolate site; that span reads GHL. Lys-224 bears the N6-(pyridoxal phosphate)lysine mark. 348–350 serves as a coordination point for (6S)-5,6,7,8-tetrahydrofolate; sequence SPF.

It belongs to the SHMT family. In terms of assembly, homodimer. Pyridoxal 5'-phosphate is required as a cofactor.

The protein resides in the cytoplasm. The catalysed reaction is (6R)-5,10-methylene-5,6,7,8-tetrahydrofolate + glycine + H2O = (6S)-5,6,7,8-tetrahydrofolate + L-serine. The protein operates within one-carbon metabolism; tetrahydrofolate interconversion. It functions in the pathway amino-acid biosynthesis; glycine biosynthesis; glycine from L-serine: step 1/1. Its function is as follows. Catalyzes the reversible interconversion of serine and glycine with tetrahydrofolate (THF) serving as the one-carbon carrier. This reaction serves as the major source of one-carbon groups required for the biosynthesis of purines, thymidylate, methionine, and other important biomolecules. Also exhibits THF-independent aldolase activity toward beta-hydroxyamino acids, producing glycine and aldehydes, via a retro-aldol mechanism. This chain is Serine hydroxymethyltransferase, found in Campylobacter jejuni subsp. doylei (strain ATCC BAA-1458 / RM4099 / 269.97).